Consider the following 362-residue polypeptide: Chorismate synthase (362 aa).

Positions 48 and 54 each coordinate NADP(+). Residues 125-127 (RSS), 238-239 (NA), G278, 293-297 (KPTSS), and R319 each bind FMN.

This sequence belongs to the chorismate synthase family. As to quaternary structure, homotetramer. FMNH2 is required as a cofactor.

The enzyme catalyses 5-O-(1-carboxyvinyl)-3-phosphoshikimate = chorismate + phosphate. It participates in metabolic intermediate biosynthesis; chorismate biosynthesis; chorismate from D-erythrose 4-phosphate and phosphoenolpyruvate: step 7/7. Catalyzes the anti-1,4-elimination of the C-3 phosphate and the C-6 proR hydrogen from 5-enolpyruvylshikimate-3-phosphate (EPSP) to yield chorismate, which is the branch point compound that serves as the starting substrate for the three terminal pathways of aromatic amino acid biosynthesis. This reaction introduces a second double bond into the aromatic ring system. The protein is Chorismate synthase of Tolumonas auensis (strain DSM 9187 / NBRC 110442 / TA 4).